The primary structure comprises 695 residues: Polyribonucleotide nucleotidyltransferase (695 aa).

The Mg(2+) site is built by aspartate 488 and aspartate 494. The 60-residue stretch at 554–613 folds into the KH domain; that stretch reads PKTTIIKIKTDKIRDLIGRGGETIKGIISTSCASIDVDDSGNVNIFSNNQKSFDTAVQMV. Residues 623–690 enclose the S1 motif domain; sequence NKVYTGKVVK…DRGRIKLSRK (68 aa).

Belongs to the polyribonucleotide nucleotidyltransferase family. In terms of assembly, component of the RNA degradosome, which is a multiprotein complex involved in RNA processing and mRNA degradation. Mg(2+) is required as a cofactor.

Its subcellular location is the cytoplasm. The enzyme catalyses RNA(n+1) + phosphate = RNA(n) + a ribonucleoside 5'-diphosphate. In terms of biological role, involved in mRNA degradation. Catalyzes the phosphorolysis of single-stranded polyribonucleotides processively in the 3'- to 5'-direction. This is Polyribonucleotide nucleotidyltransferase from Vesicomyosocius okutanii subsp. Calyptogena okutanii (strain HA).